A 443-amino-acid polypeptide reads, in one-letter code: Probable D-serine dehydratase (443 aa).

Lys-116 is subject to N6-(pyridoxal phosphate)lysine.

This sequence belongs to the serine/threonine dehydratase family. DsdA subfamily. It depends on pyridoxal 5'-phosphate as a cofactor.

It carries out the reaction D-serine = pyruvate + NH4(+). The polypeptide is Probable D-serine dehydratase (Bacillus cereus (strain AH187)).